The sequence spans 660 residues: Pro-secreted protein ORF2 (660 aa).

Residues 1 to 23 form the signal peptide; it reads MRPRAVLLLLFVLLPMLPAPPAG. Disordered stretches follow at residues 19–43 and 64–125; these read APPA…GFWG and ADVV…VPDV. Positions 28–33 match the Nuclear localization signal motif; the sequence is RRRGRR. Positions 93–124 are enriched in low complexity; sequence RPSAAPRRRSAPAGAAPLTAVSPAPDTAPVPD. Asn137 and Asn310 each carry an N-linked (GlcNAc...) asparagine; by host glycan. The segment at 368–394 is particle formation; the sequence is IALTLFNLADTLLGGLPTELISSAGGQ. Asn562 carries N-linked (GlcNAc...) asparagine; by host glycosylation. Residues 585 to 610 form an oligomerization region; sequence TTSLGAGPTSISAVGVLAPHSALAVL.

This sequence belongs to the hepevirus capsid protein family. In terms of assembly, homodimer. Self-assembles to form the capsid. The capsid is dominated by dimers that define the 30 morphological units. Interacts with phosphorylated protein ORF3. Interacts with host TMEM134. Interacts with host ASGR1 and ASGR2; these interactions facilitate infection of host hepatocytes. In terms of processing, cleaved by host protease in the N-terminus. N-glycosylated. Post-translationally, not N-glycosylated. The C-terminus of the capsid protein ORF2 is truncated in non-enveloped virions shedded in feces, probably due to host proteases.

The protein localises to the secreted. The protein resides in the virion. It is found in the host cytoplasm. Its subcellular location is the host endoplasmic reticulum. It localises to the host Golgi apparatus. The protein localises to the host cell surface. The protein resides in the host nucleus. Its function is as follows. Plays a role in the inhibition of host antibody-mediated neutralization without blocking viral cell entry. In terms of biological role, forms an icosahedral capsid with a T=1 symmetry and a 34 nm diameter. The capsid is composed of 60 copies linked to each other. Binds to the 5' end of the genomic RNA to mediate genome encapsidation. Binds to heparin surface proteoglycans (HSPGs) to mediate viral entry. Additionally, the interactions with host ASGR1 and ASGR2 facilitate viral infection of hepatocytes. Inhibits IFN production by blocking host TBK1-induced IRF3 phosphorylation. The nuclear form probably modulates host gene expression. The sequence is that of Pro-secreted protein ORF2 from Hepatitis E virus genotype 3 (isolate Human/United States/US2) (HEV-3).